The primary structure comprises 279 residues: Undecaprenyl-diphosphatase (279 aa).

6 helical membrane passes run 45–65 (FVEM…IVIY), 85–105 (WQLW…ALPF), 113–133 (FNFM…FIWV), 188–208 (SVAA…YSGL), 226–246 (LILL…IRFL), and 255–275 (FTIF…YWLV).

It belongs to the UppP family.

Its subcellular location is the cell membrane. It catalyses the reaction di-trans,octa-cis-undecaprenyl diphosphate + H2O = di-trans,octa-cis-undecaprenyl phosphate + phosphate + H(+). Its function is as follows. Catalyzes the dephosphorylation of undecaprenyl diphosphate (UPP). Confers resistance to bacitracin. The sequence is that of Undecaprenyl-diphosphatase from Streptococcus agalactiae serotype III (strain NEM316).